Reading from the N-terminus, the 1164-residue chain is DNA-directed RNA polymerase 132 kDa polypeptide (1164 aa).

The protein belongs to the RNA polymerase beta chain family. As to quaternary structure, the DNA-dependent RNA polymerase used for intermediate and late genes expression consists of eight subunits (147) kDa, (133) kDa, (35) kDa, (30) kDa, (22) kDa, (19) kDa, (18) kDa and (7) kDa totalling more than 500 kDa in mass. The same holoenzyme, with the addition of the transcription-specificity factor RAP94, is used for early gene expression.

The protein localises to the virion. The enzyme catalyses RNA(n) + a ribonucleoside 5'-triphosphate = RNA(n+1) + diphosphate. Its function is as follows. Part of the DNA-dependent RNA polymerase which catalyzes the transcription of viral DNA into RNA using the four ribonucleoside triphosphates as substrates. Responsible for the transcription of early, intermediate and late genes. DNA-dependent RNA polymerase associates with the early transcription factor (ETF), itself composed of D6 and A7, thereby allowing the early genes transcription. Late transcription, and probably also intermediate transcription, require newly synthesized RNA polymerase. This chain is DNA-directed RNA polymerase 132 kDa polypeptide (RPO132), found in Bos taurus (Bovine).